The primary structure comprises 249 residues: Type I iodothyronine deiodinase (249 aa).

Residues Met-1 to Arg-12 lie on the Extracellular side of the membrane. Residues Leu-13–Phe-33 form a helical; Signal-anchor for type III membrane protein membrane-spanning segment. The Cytoplasmic segment spans residues Pro-34 to Ser-249. The active site involves Sec-126. Sec-126 is a non-standard amino acid (selenocysteine).

Belongs to the iodothyronine deiodinase family. As to quaternary structure, predominantly monomer. Can form homodimers but homodimerization is not essential for enzyme activity.

It is found in the cell membrane. The protein localises to the endoplasmic reticulum membrane. The protein resides in the basolateral cell membrane. The catalysed reaction is 3,3',5-triiodo-L-thyronine + iodide + A + H(+) = L-thyroxine + AH2. The enzyme catalyses 3,3',5'-triiodo-L-thyronine + iodide + A + H(+) = L-thyroxine + AH2. It catalyses the reaction 3,3'-diiodo-L-thyronine + iodide + A + H(+) = 3,3',5'-triiodo-L-thyronine + AH2. It carries out the reaction 3,3'-diiodo-L-thyronine + iodide + A + H(+) = 3,3',5-triiodo-L-thyronine + AH2. The catalysed reaction is 3'-iodo-L-thyronine + iodide + A + H(+) = 3',5'-diiodo-L-thyronine + AH2. The enzyme catalyses 3-iodo-L-thyronine + iodide + A + H(+) = 3,5-diiodo-L-thyronine + AH2. It catalyses the reaction 3-iodo-L-thyronine + iodide + A + H(+) = 3,3'-diiodo-L-thyronine + AH2. It carries out the reaction 3,3'-diiodothyronamine + iodide + A + H(+) = 3,3',5'-triiodothyronamine + AH2. The catalysed reaction is 3'-iodothyronamine + iodide + A + H(+) = 3',5'-diiodothyronamine + AH2. The enzyme catalyses 3-iodothyronamine + iodide + A + H(+) = 3,3'-diiodothyronamine + AH2. It catalyses the reaction 3,3'-diiodothyronamine + iodide + A + H(+) = 3,3',5-triiodothyronamine + AH2. It carries out the reaction 3-iodothyronamine + iodide + A + H(+) = 3,5-diiodothyronamine + AH2. The catalysed reaction is 3,3'-diiodo-L-thyronine sulfate + iodide + A + H(+) = 3,3',5'-triiodo-L-thyronine sulfate + AH2. The enzyme catalyses 3,3',5'-triiodo-L-thyronine sulfate + iodide + A + H(+) = L-thyroxine sulfate + AH2. It catalyses the reaction 3,3'-diiodo-L-thyronine sulfate + iodide + A + H(+) = 3,3',5-triiodo-L-thyronine sulfate + AH2. In terms of biological role, plays a crucial role in the metabolism of thyroid hormones (TH) and has specific roles in TH activation and inactivation by deiodination. Catalyzes the deiodination of L-thyroxine (T4) to 3,5,3'-triiodothyronine (T3) and 3,3',5'-triiodothyronine (rT3) to 3,3'-diiodothyronine (3,3'-T2) via outer-ring deiodination (ORD). Catalyzes the deiodination of T4 to rT3, T3 to 3,3'-T2, 3,5-diiodothyronine (3,5-T2) to 3-monoiodothyronine (3-T1) and 3,3'-T2 to 3-T1 via inner-ring deiodination (IRD). Catalyzes the deiodination of 3',5'-diiodothyronine (3',5'-T2) to 3'-monoiodothyronine (3'-T1) via ORD. Catalyzes the phenolic ring deiodinations of 3,3',5'-triiodothyronamine, 3',5'-diiodothyronamine and 3,3'-diiodothyronamine as well as tyrosyl ring deiodinations of 3,5,3'-triiodothyronamine and 3,5-diiodothyronamine. Catalyzes the deiodination of L-thyroxine sulfate and 3,3',5-triiodo-L-thyronine sulfate via IRD and of 3,3',5'-triiodo-L-thyronine sulfate via ORD. This chain is Type I iodothyronine deiodinase (DIO1), found in Sus scrofa (Pig).